The following is a 118-amino-acid chain: Large ribosomal subunit protein uL18 (118 aa).

The disordered stretch occupies residues methionine 1 to glycine 24. Residues threonine 10–glycine 20 are compositionally biased toward basic residues.

This sequence belongs to the universal ribosomal protein uL18 family. Part of the 50S ribosomal subunit; part of the 5S rRNA/L5/L18/L25 subcomplex. Contacts the 5S and 23S rRNAs.

Functionally, this is one of the proteins that bind and probably mediate the attachment of the 5S RNA into the large ribosomal subunit, where it forms part of the central protuberance. In Lactiplantibacillus plantarum (strain ATCC BAA-793 / NCIMB 8826 / WCFS1) (Lactobacillus plantarum), this protein is Large ribosomal subunit protein uL18.